A 436-amino-acid chain; its full sequence is MASLLPFVQTRSNTVNFFMRRSGPELWKTLTSVSKSGQKKGRRNTRQPVRPLNRFYRIGSSPMKIEFAGLNAPIRMRETENQNLMSIAEQTEDEIRDSMGGTKKILEERDTGKKKRNREKLHPMERGFSGTQLVGQKLGAPPPLDGVNFDDFETYCLEVKRTSNMTNVFGRVHTMSALVVTGNGRGLAGYAVGKAPIHRTTTAIINGMGMASRKLFHVELHEGRTIYQDFYAECRNTRVFAQRRPRGFGLTCHPRLIKICEAIGIKDIYVKVEGSTKNYLALTHAFVTGLLNQETHQQLAERKGLHVVEMSPSRHFLPQIVASPISTELKTEETLEALDRLNLDDFYGEGRYPLRKPKSLPFFSNLEGHLDARWRKHPFRNQESTMIRLIADNMVPRWTRDARAAWADQRNERMTTGVEPMPLGIGLSHVVPKKDD.

Residues 152–218 (FETYCLEVKR…GMASRKLFHV (67 aa)) form the S5 DRBM domain. The tract at residues 417–436 (GVEPMPLGIGLSHVVPKKDD) is disordered.

It belongs to the universal ribosomal protein uS5 family. In terms of assembly, component of the mitochondrial ribosome small subunit (28S) which comprises a 12S rRNA and about 30 distinct proteins.

It is found in the mitochondrion. This chain is Small ribosomal subunit protein uS5m (mrps-5), found in Caenorhabditis elegans.